The following is a 2297-amino-acid chain: Xin actin-binding repeat-containing protein 1 (2297 aa).

The span at methionine 1–threonine 11 shows a compositional bias: basic and acidic residues. Residues methionine 1–proline 28 are disordered. Xin repeat units follow at residues glycine 104–aspartate 119, glycine 139–aspartate 154, glycine 169–aspartate 184, glycine 208–aspartate 223, glycine 248–cysteine 263, serine 286–aspartate 301, glycine 323–aspartate 338, alanine 362–serine 377, and glycine 396–aspartate 411. Over residues glycine 433–phenylalanine 442 the composition is skewed to basic and acidic residues. The segment at glycine 433–aspartate 461 is disordered. Xin repeat units lie at residues glycine 464–asparagine 479, glycine 494–tyrosine 509, glycine 532–aspartate 547, aspartate 570–aspartate 585, serine 605–aspartate 620, alanine 638–aspartate 653, valine 677–aspartate 692, glycine 715–glycine 730, glycine 747–glycine 762, glycine 779–aspartate 794, valine 818–tyrosine 833, glycine 856–aspartate 871, glycine 893–aspartate 908, and lysine 928–serine 943. At serine 952 the chain carries Phosphoserine. Xin repeat units lie at residues glycine 959–aspartate 974, glycine 997–aspartate 1012, and alanine 1033–aspartate 1048. Disordered regions lie at residues proline 1617–lysine 1680, lysine 1866–isoleucine 1900, serine 2147–lysine 2191, and glutamate 2243–histidine 2297. 2 stretches are compositionally biased toward low complexity: residues serine 1618–threonine 1630 and serine 1644–serine 1656. Composition is skewed to basic and acidic residues over residues serine 1876–serine 1885 and lysine 2151–threonine 2162. Residues glutamine 2166 to serine 2180 show a composition bias toward low complexity. The segment covering glycine 2259–serine 2278 has biased composition (polar residues).

It belongs to the Xin family. As to expression, expressed at intercalated disks in the heart (at protein level).

Its subcellular location is the cell junction. The protein resides in the adherens junction. The protein localises to the desmosome. In terms of biological role, positively regulates organization of the outer plexiform layer and Muller glia cells in the retina. May protect actin filaments from depolymerization. May play a role in development of normal skeletal muscle morphology and muscle fiber type composition. The chain is Xin actin-binding repeat-containing protein 1 from Danio rerio (Zebrafish).